We begin with the raw amino-acid sequence, 291 residues long: uncharacterized protein (291 aa).

The next 10 membrane-spanning stretches (helical) occupy residues 5–23, 33–52, 69–91, 101–120, 127–144, 148–165, 172–194, 209–228, 235–257, and 262–284; these read ILLS…YFST, IFGF…VFLF, PLLI…LFLW, VSFG…RLVF, VKFL…SNIL, GLSW…TYFA, INDL…YFAW, LLLL…TYIV, INVL…FLIG, and SETI…EGLV.

Belongs to the EamA transporter family.

The protein localises to the cell membrane. This is an uncharacterized protein from Pasteurella multocida (strain Pm70).